Consider the following 463-residue polypeptide: Thiamine-repressible acid phosphatase pho4 (463 aa).

A signal peptide spans 1–18 (MKLSGISLWLLAASIVHA). The active-site Nucleophile is the His69. N-linked (GlcNAc...) asparagine glycans are attached at residues Asn98, Asn104, Asn186, Asn221, Asn251, and Asn328. Asp341 (proton donor) is an active-site residue. Residues Asn433, Asn439, and Asn458 are each glycosylated (N-linked (GlcNAc...) asparagine).

This sequence belongs to the histidine acid phosphatase family.

It is found in the secreted. Its subcellular location is the cell wall. The catalysed reaction is a phosphate monoester + H2O = an alcohol + phosphate. Its function is as follows. May dephosphorylate thiamine phosphates. This chain is Thiamine-repressible acid phosphatase pho4 (pho4), found in Schizosaccharomyces pombe (strain 972 / ATCC 24843) (Fission yeast).